A 212-amino-acid chain; its full sequence is Peptide methionine sulfoxide reductase MsrA (212 aa).

The active site involves Cys-52.

Belongs to the MsrA Met sulfoxide reductase family.

The catalysed reaction is L-methionyl-[protein] + [thioredoxin]-disulfide + H2O = L-methionyl-(S)-S-oxide-[protein] + [thioredoxin]-dithiol. It catalyses the reaction [thioredoxin]-disulfide + L-methionine + H2O = L-methionine (S)-S-oxide + [thioredoxin]-dithiol. Its function is as follows. Has an important function as a repair enzyme for proteins that have been inactivated by oxidation. Catalyzes the reversible oxidation-reduction of methionine sulfoxide in proteins to methionine. In Yersinia pseudotuberculosis serotype O:1b (strain IP 31758), this protein is Peptide methionine sulfoxide reductase MsrA.